The chain runs to 603 residues: MSNLYSAGTPHIQELQNILDSQQEEWAAIKENYTTQNSLIAKENCTLKMKLSELENKVSQLIRENVQLRSQVSLNKLEFQNKLASQINVLENGVIQRLEEVLYMFDSIRKKESLPSRPTSTNETVDRIKKRRQSNEEARNRRRSRSVSTGSAHSTSSMKRRSSTFGEDLIDASIKRALDNAQSNSLQTSDTLRLSELPGLNEIDTNNVNNDNLLSPIPHKKRKSNRRKSIYVPELPKPNNEPLMENTIEQQENICSESLIQEGEQSEKLGENLDADQSHVEDQSFSFTNSVLEYSIPEENTLPKQDILDETEKRDTAVNQKKKLEIFHDPPVEELSSSKNEKPPENSITNDPAFITVTGNNKVKHSMKSRKPKKNKGSVDESMPCTQSTESVDFDRPRRTRGKTVDYRLPSLRAKMRRPTEKLVDATTTVNIQDLQVKYKKSKKVLEKELKTDMKAMKSPKKNEKTFESGTIFKKISRDNESRPSSTHSTSSVDAECSHNNSHSENINSSINDTTHSSFNNSTKSVLSDITNISKNKQQQKTKKLLKTAIINDIYDDKTKNAQKTVSFRVNEDDLSVFDLIQHNDTNKSSPKTYRSRSRKNKA.

A coiled-coil region spans residues His11–Leu74. 2 disordered regions span residues Glu112 to Thr164 and Asn201 to Arg227. Low complexity-rich tracts occupy residues Ser146 to Ser157 and Asn201 to Leu214. Residues Pro218–Arg227 are compositionally biased toward basic residues. Residues Lys304–Glu325 adopt a coiled-coil conformation. The interval Pro331 to Arg399 is disordered. A compositionally biased stretch (basic residues) spans Lys362–Lys376. Residues Asn431–Lys451 adopt a coiled-coil conformation. Positions Lys455–Phe467 are enriched in basic and acidic residues. Disordered stretches follow at residues Lys455–Phe519 and His583–Ala603. The segment covering Arg483–Asn512 has biased composition (low complexity). Positions His583–Thr593 are enriched in polar residues. A compositionally biased stretch (basic residues) spans Tyr594–Ala603.

Belongs to the shugoshin family.

The protein localises to the nucleus. It is found in the chromosome. The protein resides in the centromere. Plays a central role in chromosome cohesion during cell division by preventing premature dissociation of cohesin complex from centromeres after prophase, when most of cohesin complex dissociates from chromosomes arms. This is Shugoshin (SGO1) from Candida glabrata (strain ATCC 2001 / BCRC 20586 / JCM 3761 / NBRC 0622 / NRRL Y-65 / CBS 138) (Yeast).